The following is a 192-amino-acid chain: Thiol-disulfide oxidoreductase ResA (192 aa).

A helical; Signal-anchor for type II membrane protein membrane pass occupies residues 22–41 (SSILLILVAAVVFAIVSNMK). The 143-residue stretch at 47-189 (YRVGDAAPDF…LEGYLNDIAP (143 aa)) folds into the Thioredoxin domain. A disulfide bridge connects residues Cys-89 and Cys-92.

Belongs to the thioredoxin family. ResA subfamily.

Its subcellular location is the cell membrane. The protein operates within protein modification; cytochrome c assembly. Functionally, thiol-disulfide oxidoreductase which is required in disulfide reduction during c-type cytochrome synthesis. May accept reducing equivalents from CcdA, leading to breakage of disulfide bonds in apocytochrome c; following this reduction heme can be covalently attached. The sequence is that of Thiol-disulfide oxidoreductase ResA from Oceanobacillus iheyensis (strain DSM 14371 / CIP 107618 / JCM 11309 / KCTC 3954 / HTE831).